The sequence spans 185 residues: Crossover junction endodeoxyribonuclease RuvC (185 aa).

Active-site residues include Asp7, Glu66, and Asp137. Mg(2+)-binding residues include Asp7, Glu66, and Asp137.

The protein belongs to the RuvC family. In terms of assembly, homodimer which binds Holliday junction (HJ) DNA. The HJ becomes 2-fold symmetrical on binding to RuvC with unstacked arms; it has a different conformation from HJ DNA in complex with RuvA. In the full resolvosome a probable DNA-RuvA(4)-RuvB(12)-RuvC(2) complex forms which resolves the HJ. The cofactor is Mg(2+).

It is found in the cytoplasm. It carries out the reaction Endonucleolytic cleavage at a junction such as a reciprocal single-stranded crossover between two homologous DNA duplexes (Holliday junction).. In terms of biological role, the RuvA-RuvB-RuvC complex processes Holliday junction (HJ) DNA during genetic recombination and DNA repair. Endonuclease that resolves HJ intermediates. Cleaves cruciform DNA by making single-stranded nicks across the HJ at symmetrical positions within the homologous arms, yielding a 5'-phosphate and a 3'-hydroxyl group; requires a central core of homology in the junction. The consensus cleavage sequence is 5'-(A/T)TT(C/G)-3'. Cleavage occurs on the 3'-side of the TT dinucleotide at the point of strand exchange. HJ branch migration catalyzed by RuvA-RuvB allows RuvC to scan DNA until it finds its consensus sequence, where it cleaves and resolves the cruciform DNA. The chain is Crossover junction endodeoxyribonuclease RuvC from Anaeromyxobacter dehalogenans (strain 2CP-1 / ATCC BAA-258).